The primary structure comprises 344 residues: Phenylalanine--tRNA ligase alpha subunit (344 aa).

Glu-256 lines the Mg(2+) pocket.

Belongs to the class-II aminoacyl-tRNA synthetase family. Phe-tRNA synthetase alpha subunit type 1 subfamily. Tetramer of two alpha and two beta subunits. Requires Mg(2+) as cofactor.

It is found in the cytoplasm. The enzyme catalyses tRNA(Phe) + L-phenylalanine + ATP = L-phenylalanyl-tRNA(Phe) + AMP + diphosphate + H(+). The polypeptide is Phenylalanine--tRNA ligase alpha subunit (Onion yellows phytoplasma (strain OY-M)).